We begin with the raw amino-acid sequence, 100 residues long: Urease subunit gamma (100 aa).

Belongs to the urease gamma subunit family. In terms of assembly, heterotrimer of UreA (gamma), UreB (beta) and UreC (alpha) subunits. Three heterotrimers associate to form the active enzyme.

Its subcellular location is the cytoplasm. It carries out the reaction urea + 2 H2O + H(+) = hydrogencarbonate + 2 NH4(+). The protein operates within nitrogen metabolism; urea degradation; CO(2) and NH(3) from urea (urease route): step 1/1. This is Urease subunit gamma from Burkholderia thailandensis (strain ATCC 700388 / DSM 13276 / CCUG 48851 / CIP 106301 / E264).